We begin with the raw amino-acid sequence, 258 residues long: Coiled-coil domain-containing protein 127 (258 aa).

A coiled-coil region spans residues 50 to 170 (KEIEKEKEAC…EEALAERQSI (121 aa)).

This chain is Coiled-coil domain-containing protein 127 (CCDC127), found in Sus scrofa (Pig).